Here is a 362-residue protein sequence, read N- to C-terminus: MAGTYKIAVLPGDGIGPEVMLQAHKVLDAVEEKFGFTLERSEHDVGGIAIDNHGCPLPESTMKGCEESDAILFGSVGGPKWEHLAPNDQPERGALLPLRKHFQLFCNLRPAQIHSGLEGFSPLRADISERGFDIVVVRELTGGIYFGQPKGREGEGPQEKAYDTEIYHRYEIERIARIAFESAMLREKNVYSIDKANVLQSSILWREVVEEVAKDYPEVTLNHMYIDNATMQLIKDPSQFDVMLCSNIFGDIISDECAMITGSMGMLPSASLNQEKFGMYEPAGGSAPDIAGKNIANPVAQILSAALMLRYSLDEEKAARAIEQAVSQALEAGELTADLAGKGAALSTSEMGDKIAAYIRQA.

NAD(+) is bound at residue 78 to 91 (GPKWEHLAPNDQPE). Residues arginine 99, arginine 109, arginine 138, and aspartate 227 each contribute to the substrate site. Positions 227, 251, and 255 each coordinate Mg(2+). Position 285–297 (285–297 (GSAPDIAGKNIAN)) interacts with NAD(+).

It belongs to the isocitrate and isopropylmalate dehydrogenases family. LeuB type 1 subfamily. As to quaternary structure, homodimer. The cofactor is Mg(2+). Mn(2+) is required as a cofactor.

It is found in the cytoplasm. It catalyses the reaction (2R,3S)-3-isopropylmalate + NAD(+) = 4-methyl-2-oxopentanoate + CO2 + NADH. Its pathway is amino-acid biosynthesis; L-leucine biosynthesis; L-leucine from 3-methyl-2-oxobutanoate: step 3/4. Functionally, catalyzes the oxidation of 3-carboxy-2-hydroxy-4-methylpentanoate (3-isopropylmalate) to 3-carboxy-4-methyl-2-oxopentanoate. The product decarboxylates to 4-methyl-2 oxopentanoate. This Photobacterium profundum (strain SS9) protein is 3-isopropylmalate dehydrogenase.